Here is a 188-residue protein sequence, read N- to C-terminus: Ribosome hibernation promotion factor (188 aa).

The interval 93–125 (KTRVNRKKRKESEHEPFPATPETPPETAVDHDK) is disordered.

Belongs to the HPF/YfiA ribosome-associated protein family. Long HPF subfamily. Interacts with 100S ribosomes.

It is found in the cytoplasm. Functionally, required for dimerization of active 70S ribosomes into 100S ribosomes in stationary phase; 100S ribosomes are translationally inactive and sometimes present during exponential growth. This Staphylococcus carnosus (strain TM300) protein is Ribosome hibernation promotion factor.